Consider the following 150-residue polypeptide: UPF0735 ACT domain-containing protein DSY2247 (150 aa).

An ACT domain is found at 74–149; the sequence is TFSLTLENTA…GVRKIEVIGQ (76 aa).

This sequence belongs to the UPF0735 family.

The polypeptide is UPF0735 ACT domain-containing protein DSY2247 (Desulfitobacterium hafniense (strain Y51)).